The primary structure comprises 189 residues: Segregation and condensation protein B (189 aa).

The protein belongs to the ScpB family. In terms of assembly, homodimer. Homodimerization may be required to stabilize the binding of ScpA to the Smc head domains. Component of a cohesin-like complex composed of ScpA, ScpB and the Smc homodimer, in which ScpA and ScpB bind to the head domain of Smc. The presence of the three proteins is required for the association of the complex with DNA.

It is found in the cytoplasm. Functionally, participates in chromosomal partition during cell division. May act via the formation of a condensin-like complex containing Smc and ScpA that pull DNA away from mid-cell into both cell halves. In Lachnoclostridium phytofermentans (strain ATCC 700394 / DSM 18823 / ISDg) (Clostridium phytofermentans), this protein is Segregation and condensation protein B.